A 74-amino-acid chain; its full sequence is uncharacterized protein (74 aa).

This is an uncharacterized protein from Escherichia coli (strain K12).